Reading from the N-terminus, the 376-residue chain is Protein insensitive (376 aa).

Positions 50–79 form a coiled coil; the sequence is QVEVENRALRDKVRYLEAKLQQHKDLLSQI. Residues 258–356 enclose the BEN domain; that stretch reads GPNNTCVPAS…TKCADENKMM (99 aa).

In terms of assembly, homodimer. Interacts (via BEN domain) with Su(H). Interacts with Cp190.

It localises to the nucleus. In terms of biological role, can act as both a transcriptional repressor and corepressor. Represses the expression of genes involved in neural development and preferentially binds palindromic sequence 5'-CCAATTGG-3' to mediate transcriptional repression. Acts as a corepressor for suppressor of hairless (Su(H)) and inhibits Notch signaling during peripheral nervous system development. This chain is Protein insensitive (insv), found in Drosophila melanogaster (Fruit fly).